We begin with the raw amino-acid sequence, 349 residues long: tRNA N6-adenosine threonylcarbamoyltransferase (349 aa).

Fe cation-binding residues include H117, H121, and Y138. Substrate-binding positions include 138 to 142, D170, D191, and N271; that span reads YVAGG. D299 is a binding site for Fe cation.

It belongs to the KAE1 / TsaD family. It depends on Fe(2+) as a cofactor.

It localises to the cytoplasm. The enzyme catalyses L-threonylcarbamoyladenylate + adenosine(37) in tRNA = N(6)-L-threonylcarbamoyladenosine(37) in tRNA + AMP + H(+). Functionally, required for the formation of a threonylcarbamoyl group on adenosine at position 37 (t(6)A37) in tRNAs that read codons beginning with adenine. Is probably involved in the transfer of the threonylcarbamoyl moiety of threonylcarbamoyl-AMP (TC-AMP) to the N6 group of A37. This Aeropyrum pernix (strain ATCC 700893 / DSM 11879 / JCM 9820 / NBRC 100138 / K1) protein is tRNA N6-adenosine threonylcarbamoyltransferase.